Consider the following 214-residue polypeptide: uncharacterized protein (214 aa).

The helical transmembrane segment at 10-30 (LLLAGIGGFMVGGLASWVVSS) threads the bilayer. A compositionally biased stretch (polar residues) spans 147-157 (SSQANSQSTQP). Residues 147–166 (SSQANSQSTQPRDPIPTENF) are disordered.

It is found in the membrane. This is an uncharacterized protein from Schizosaccharomyces pombe (strain 972 / ATCC 24843) (Fission yeast).